Here is a 156-residue protein sequence, read N- to C-terminus: Small ribosomal subunit protein uS7 (156 aa).

It belongs to the universal ribosomal protein uS7 family. Part of the 30S ribosomal subunit. Contacts proteins S9 and S11.

Functionally, one of the primary rRNA binding proteins, it binds directly to 16S rRNA where it nucleates assembly of the head domain of the 30S subunit. Is located at the subunit interface close to the decoding center, probably blocks exit of the E-site tRNA. The sequence is that of Small ribosomal subunit protein uS7 from Onion yellows phytoplasma (strain OY-M).